The chain runs to 356 residues: Nitric oxide synthase oxygenase (356 aa).

Cys-63 provides a ligand contact to heme.

It belongs to the NOS family. Bacterial NOS oxygenase subfamily. Homodimer. Forms a complex with trpS2; one homodimer of trpS2 binds one homodimer of nos. The cofactor is heme. (6S)-5,6,7,8-tetrahydrofolate is required as a cofactor.

The catalysed reaction is 3 reduced [flavodoxin] + 2 L-arginine + 4 O2 = 3 oxidized [flavodoxin] + 2 L-citrulline + 2 nitric oxide + 4 H2O + 5 H(+). Nitric oxide synthase activity is increased by trpS2. In terms of biological role, catalyzes the production of nitric oxide. The complex between TrpRS II and nitric oxide synthase oxygenase catalyzes the regioselective nitration of tryptophan at the 4-position. The polypeptide is Nitric oxide synthase oxygenase (nos) (Deinococcus radiodurans (strain ATCC 13939 / DSM 20539 / JCM 16871 / CCUG 27074 / LMG 4051 / NBRC 15346 / NCIMB 9279 / VKM B-1422 / R1)).